A 2198-amino-acid polypeptide reads, in one-letter code: RNA-directed RNA polymerase L (2198 aa).

The tract at residues lysine 26–cysteine 284 is endonuclease. Glutamate 51, aspartate 89, and glutamate 102 together coordinate Mn(2+). Lysine 115 is a catalytic residue. Positions cysteine 1161–valine 1359 constitute a RdRp catalytic domain. Residue aspartate 1319 participates in Mg(2+) binding.

Belongs to the Bunyavirales RNA polymerase family. In terms of assembly, homomultimer; the oligomeric structure is essential for the polymerase activity. Interacts with nucleoprotein N. Interacts with protein Z; this interaction inhibits viral transcription and replication, Z partially blocks the product exit tunnel for the releasing nascent RNA product. Requires Mn(2+) as cofactor. Mg(2+) is required as a cofactor.

It is found in the virion. It localises to the host cytoplasm. The catalysed reaction is RNA(n) + a ribonucleoside 5'-triphosphate = RNA(n+1) + diphosphate. Its function is as follows. RNA-dependent RNA polymerase, which is responsible for the replication and transcription of the viral RNA genome using antigenomic RNA as an intermediate. During transcription, synthesizes subgenomic RNAs and assures their capping by a cap-snatching mechanism, which involves the endonuclease activity cleaving the host capped pre-mRNAs. These short capped RNAs are then used as primers for viral transcription. The 3'-end of subgenomic mRNAs molecules are heterogeneous and not polyadenylated. The replicase function is to direct synthesis of antigenomic and genomic RNA which are encapsidated and non capped. As a consequence of the use of the same enzyme for both transcription and replication, these mechanisms need to be well coordinated. These processes may be regulated by proteins N and Z in a dose-dependent manner. Z protein inhibits the viral polymerase L und thus the viral transcription and RNA synthesis. The sequence is that of RNA-directed RNA polymerase L from Homo sapiens (Human).